A 207-amino-acid chain; its full sequence is Probable RNA 2'-phosphotransferase (207 aa).

It belongs to the KptA/TPT1 family.

Its function is as follows. Removes the 2'-phosphate from RNA via an intermediate in which the phosphate is ADP-ribosylated by NAD followed by a presumed transesterification to release the RNA and generate ADP-ribose 1''-2''-cyclic phosphate (APPR&gt;P). May function as an ADP-ribosylase. In Methanosarcina barkeri (strain Fusaro / DSM 804), this protein is Probable RNA 2'-phosphotransferase.